Consider the following 279-residue polypeptide: MDVITDISPLRTRLVGESSIAFVPTMGGLHEGHLSLIRAARQHRECVIASIFVNRLQFAPTEDFDRYPRTLEQDCALLEEQGVHIVFAPEEKTLYPVPQEFMVEPSPIANMLEGKYRPGFFRGVATVVLKLFNIVQPQTAVFGKKDYQQLHIVRELARQFNLPIEIVAGETVRASDNLALSSRNRYLREEERAEAIRLYQVLSQVKREIEGGNRNFAGLEENAMKILATHGWNTDYVSIRERDTLAPAQPRDGNMVVLGAARLGETRLIDNLEITPKKE.

Position 26-33 (26-33) interacts with ATP; the sequence is MGGLHEGH. Residue H33 is the Proton donor of the active site. Q57 contacts (R)-pantoate. Q57 contacts beta-alanine. 143-146 is a binding site for ATP; it reads GKKD. Position 149 (Q149) interacts with (R)-pantoate. Residues V172 and 180–183 each bind ATP; that span reads LSSR.

Belongs to the pantothenate synthetase family. As to quaternary structure, homodimer.

The protein localises to the cytoplasm. It carries out the reaction (R)-pantoate + beta-alanine + ATP = (R)-pantothenate + AMP + diphosphate + H(+). The protein operates within cofactor biosynthesis; (R)-pantothenate biosynthesis; (R)-pantothenate from (R)-pantoate and beta-alanine: step 1/1. Its function is as follows. Catalyzes the condensation of pantoate with beta-alanine in an ATP-dependent reaction via a pantoyl-adenylate intermediate. This chain is Pantothenate synthetase, found in Nitrosospira multiformis (strain ATCC 25196 / NCIMB 11849 / C 71).